We begin with the raw amino-acid sequence, 380 residues long: Succinyl-diaminopimelate desuccinylase (380 aa).

His70 lines the Zn(2+) pocket. Asp72 is a catalytic residue. A Zn(2+)-binding site is contributed by Asp104. Residue Glu138 is the Proton acceptor of the active site. The Zn(2+) site is built by Glu139, Glu167, and His353.

It belongs to the peptidase M20A family. DapE subfamily. In terms of assembly, homodimer. The cofactor is Zn(2+). Requires Co(2+) as cofactor.

It catalyses the reaction N-succinyl-(2S,6S)-2,6-diaminopimelate + H2O = (2S,6S)-2,6-diaminopimelate + succinate. The protein operates within amino-acid biosynthesis; L-lysine biosynthesis via DAP pathway; LL-2,6-diaminopimelate from (S)-tetrahydrodipicolinate (succinylase route): step 3/3. In terms of biological role, catalyzes the hydrolysis of N-succinyl-L,L-diaminopimelic acid (SDAP), forming succinate and LL-2,6-diaminopimelate (DAP), an intermediate involved in the bacterial biosynthesis of lysine and meso-diaminopimelic acid, an essential component of bacterial cell walls. The polypeptide is Succinyl-diaminopimelate desuccinylase (Ectopseudomonas mendocina (strain ymp) (Pseudomonas mendocina)).